The sequence spans 87 residues: Cell division topological specificity factor (87 aa).

The protein belongs to the MinE family.

Its function is as follows. Prevents the cell division inhibition by proteins MinC and MinD at internal division sites while permitting inhibition at polar sites. This ensures cell division at the proper site by restricting the formation of a division septum at the midpoint of the long axis of the cell. The protein is Cell division topological specificity factor of Roseiflexus castenholzii (strain DSM 13941 / HLO8).